Here is a 196-residue protein sequence, read N- to C-terminus: Major capsid protein (196 aa).

Positions Thr-27–Ser-55 are disordered. A compositionally biased stretch (basic residues) spans Pro-32 to Lys-44.

It belongs to the luteoviruses capsid protein family.

It localises to the virion. In terms of biological role, major capsid protein. The sequence is that of Major capsid protein from Bean leafroll virus (BLRV).